Consider the following 622-residue polypeptide: Probable potassium transport system protein Kup 1 (622 aa).

The next 12 helical transmembrane spans lie at 7-27 (LLVLALGSVGVVYGDIGTSPL), 50-70 (LISLMIWALTIIVTIKYVLFL), 96-116 (TAILFFMGIAGAALFIGDAMI), 132-152 (VTPALSDYVVPIAVVILLLLF), 165-185 (FFGPITLIWFVVMGTIGFVHI), 210-230 (VGIVVLGAVFLTVTGAEALYA), 244-264 (WFTVVFPALTLNYLGQGAFVL), 282-302 (ALLPAVILATAATIIASQAVI), 334-354 (IYLPNVNTLLMFGVMALVFLF), 360-380 (LATAYGISVTGAMVVTTVLSF), 391-411 (TWWAAGALLPLFVLEFVFLGA), and 416-436 (IHDGGYVPILIAATFIVIMWT).

It belongs to the HAK/KUP transporter (TC 2.A.72) family.

The protein resides in the cell inner membrane. The enzyme catalyses K(+)(in) + H(+)(in) = K(+)(out) + H(+)(out). Transport of potassium into the cell. Likely operates as a K(+):H(+) symporter. The chain is Probable potassium transport system protein Kup 1 from Rhizobium meliloti (strain 1021) (Ensifer meliloti).